A 237-amino-acid chain; its full sequence is MAAPRRGTQKSDSDSSDEDLDRFREAAWVPPGAHQKVSDEQNEKIALPSLRVRPDCHEHDGNELQTTPEFRSHVAKKLAAILDSSIREVSQNEAVHISKAGNGDSEDEGFRLFRTSLPGEAGIVTSTIPRRKLASSSSEDSEEEQQRCREAAVSACDILRHSTLQQEPQSTPSNVCDNQPPKKKRKKKKKDRGDTSQINSVEETMHIEPGKNELQAKRKKKKKQKLEMAHCDELGNE.

Disordered regions lie at residues 1–23 (MAAP…LDRF), 50–69 (LRVR…TTPE), and 97–237 (ISKA…LGNE). Residues 52-62 (VRPDCHEHDGN) are compositionally biased toward basic and acidic residues. A compositionally biased stretch (polar residues) spans 162 to 177 (STLQQEPQSTPSNVCD). A compositionally biased stretch (basic residues) spans 181–190 (PKKKRKKKKK). Positions 182–190 (KKKRKKKKK) match the Nucleolar localization signal (NLS1) motif. 2 stretches are compositionally biased toward basic and acidic residues: residues 203–216 (ETMH…ELQA) and 225–237 (KLEM…LGNE). The short motif at 217-225 (KRKKKKKQK) is the Nucleolar localization signal (NLS2) element.

This sequence belongs to the CUSTOS family. Interacts (via NLS1 and NLS2) with dvl2; the interaction is negatively regulated by Wnt stimulation. Interacts with csnk1a1. Interacts with ctnnb1; the interaction is positively regulated by Wnt stimulation. In terms of processing, phosphorylated by ck1/csnk1a1.

It localises to the nucleus envelope. Functionally, essential for Spemann-Mangold organizer formation and subsequent anterior head development in the embryo. Inhibits canonical Wnt signaling pathway by antagonizing nuclear import of beta-catenin (ctnnb1) during embryogenesis. The polypeptide is Protein CUSTOS (Xenopus laevis (African clawed frog)).